Consider the following 334-residue polypeptide: FAD:protein FMN transferase (334 aa).

Residues 1–16 (MRNWLVALASLLLLAG) form the signal peptide. Residue Cys-17 is the site of N-palmitoyl cysteine attachment. Cys-17 carries S-diacylglycerol cysteine lipidation. FAD is bound by residues Met-31, Tyr-69, 110-112 (ALD), and Asp-168. Position 171 (Thr-171) interacts with Mg(2+). Residues Lys-174 and Ile-259 each coordinate FAD. Mg(2+) is bound by residues Asp-285 and Thr-289.

This sequence belongs to the ApbE family. Mg(2+) serves as cofactor.

It is found in the cell inner membrane. It carries out the reaction L-threonyl-[protein] + FAD = FMN-L-threonyl-[protein] + AMP + H(+). Its function is as follows. Flavin transferase that catalyzes the transfer of the FMN moiety of FAD and its covalent binding to the hydroxyl group of a threonine residue in a target flavoprotein such as NqrB and NqrC, two subunits of the NQR complex. Cannot use directly FMN instead of FAD as substrate. The sequence is that of FAD:protein FMN transferase from Vibrio cholerae serotype O1 (strain ATCC 39541 / Classical Ogawa 395 / O395).